A 299-amino-acid chain; its full sequence is Dye-decolorizing peroxidase YfeX (299 aa).

Aspartate 143 functions as the Proton acceptor in the catalytic mechanism. Residue histidine 215 coordinates heme.

The protein belongs to the DyP-type peroxidase family. Requires heme b as cofactor.

The protein localises to the cytoplasm. Has both general peroxidase activity and dye-decolorizing activity. Can catalyze the oxidation of both protoporphyrinogen IX and coproporphyrinogen III to their corresponding porphyrins. Also efficiently decolorizes the dyes alizarin red and Cibacron blue F3GA. In Escherichia coli (strain K12), this protein is Dye-decolorizing peroxidase YfeX (yfeX).